Here is a 349-residue protein sequence, read N- to C-terminus: Isopentenyl-diphosphate delta-isomerase (349 aa).

6–7 (RK) is a substrate binding site. Residues 62–64 (AMT), S93, and N122 contribute to the FMN site. Q152 is a binding site for substrate. A Mg(2+)-binding site is contributed by E153. FMN-binding positions include K184, T214, 258 to 259 (GG), and 280 to 281 (AG).

The protein belongs to the IPP isomerase type 2 family. In terms of assembly, homooctamer. Dimer of tetramers. FMN serves as cofactor. Requires NADPH as cofactor. Mg(2+) is required as a cofactor.

The protein resides in the cytoplasm. The enzyme catalyses isopentenyl diphosphate = dimethylallyl diphosphate. Its function is as follows. Involved in the biosynthesis of isoprenoids. Catalyzes the 1,3-allylic rearrangement of the homoallylic substrate isopentenyl (IPP) to its allylic isomer, dimethylallyl diphosphate (DMAPP). The chain is Isopentenyl-diphosphate delta-isomerase from Bacillus thuringiensis subsp. konkukian (strain 97-27).